The primary structure comprises 271 residues: MTLLSSADTLTLHGQTFASRVLLGTSRYPSLQSLSDSIAAARPGMVTVALRRQMNAGAAEAGFFDLLKRHDVPLLPNTAGCQTIAEAVTTAQMAREVFETDWIKLELIGDDYTLQPDPVGLIEAAALLVKDGFKVLPYCTEDLVIARRLLDAGCEALMPWGAPIGTGKGVVNPYGLRVLRERLPDVPLIVDAGLGVPSHACQVMEWGFDGVLLNTAVSQATHPEIMARAFAQGVDAGRAAYLAGPMDARESAHASTPVVGMPFWHQDGSHA.

Lysine 104 functions as the Schiff-base intermediate with DXP in the catalytic mechanism. Residues glycine 165, 192-193, and 214-215 contribute to the 1-deoxy-D-xylulose 5-phosphate site; these read AG and NT.

The protein belongs to the ThiG family. Homotetramer. Forms heterodimers with either ThiH or ThiS.

Its subcellular location is the cytoplasm. The enzyme catalyses [ThiS sulfur-carrier protein]-C-terminal-Gly-aminoethanethioate + 2-iminoacetate + 1-deoxy-D-xylulose 5-phosphate = [ThiS sulfur-carrier protein]-C-terminal Gly-Gly + 2-[(2R,5Z)-2-carboxy-4-methylthiazol-5(2H)-ylidene]ethyl phosphate + 2 H2O + H(+). Its pathway is cofactor biosynthesis; thiamine diphosphate biosynthesis. In terms of biological role, catalyzes the rearrangement of 1-deoxy-D-xylulose 5-phosphate (DXP) to produce the thiazole phosphate moiety of thiamine. Sulfur is provided by the thiocarboxylate moiety of the carrier protein ThiS. In vitro, sulfur can be provided by H(2)S. This Burkholderia thailandensis (strain ATCC 700388 / DSM 13276 / CCUG 48851 / CIP 106301 / E264) protein is Thiazole synthase.